Reading from the N-terminus, the 97-residue chain is Aspartyl/glutamyl-tRNA(Asn/Gln) amidotransferase subunit C (97 aa).

It belongs to the GatC family. As to quaternary structure, heterotrimer of A, B and C subunits.

The enzyme catalyses L-glutamyl-tRNA(Gln) + L-glutamine + ATP + H2O = L-glutaminyl-tRNA(Gln) + L-glutamate + ADP + phosphate + H(+). It carries out the reaction L-aspartyl-tRNA(Asn) + L-glutamine + ATP + H2O = L-asparaginyl-tRNA(Asn) + L-glutamate + ADP + phosphate + 2 H(+). Functionally, allows the formation of correctly charged Asn-tRNA(Asn) or Gln-tRNA(Gln) through the transamidation of misacylated Asp-tRNA(Asn) or Glu-tRNA(Gln) in organisms which lack either or both of asparaginyl-tRNA or glutaminyl-tRNA synthetases. The reaction takes place in the presence of glutamine and ATP through an activated phospho-Asp-tRNA(Asn) or phospho-Glu-tRNA(Gln). In Anaeromyxobacter sp. (strain K), this protein is Aspartyl/glutamyl-tRNA(Asn/Gln) amidotransferase subunit C.